Consider the following 469-residue polypeptide: A-type ATP synthase subunit B (469 aa).

This sequence belongs to the ATPase alpha/beta chains family. Has multiple subunits with at least A(3), B(3), C, D, E, F, H, I and proteolipid K(x).

It is found in the cell membrane. Functionally, component of the A-type ATP synthase that produces ATP from ADP in the presence of a proton gradient across the membrane. The B chain is a regulatory subunit. This Staphylothermus marinus (strain ATCC 43588 / DSM 3639 / JCM 9404 / F1) protein is A-type ATP synthase subunit B.